The chain runs to 462 residues: MDRNPSPPSSDDESAPEGDCIGDTIYSKHWFFSTLTRLIEAVSEDKSQEGQEDEAPGDLDEELEDEICKVWDMSMNEEVALFLQGFNAPEILLGVIAKSKCSRLTEMCVGILGNMSCFLEPCMAISTHQSLGEVLLLLLSDADPPTLLETSRLFLTCLSQADVAGTWVERFRKDPSVRENLCFIMSSSTNVDLLVKVGELLDRLFDMDEDLMLAWIRSDCAPRETSAVTENEDRAAPLEMVSCLLEAAKQLRSESPEGLEIYMHVLQLLTTADTGIQAIVQSPDGGEQTWDFLLDLTCNDLCQPNDPPLIVQEQKGILSSVLAVMSAMFVWRAEQGHKVEKSLPLISSLAQVLENLEECRKKCPESDAREGPDARHDNSHLQILKDVSCEFLSNILSELSKDSVLQGISLGHITERRCQCALRNLLPLYSTSVGTFLAAVGEADRSLADTLRRETPVRAEQT.

The segment at 1 to 21 (MDRNPSPPSSDDESAPEGDCI) is disordered.

This sequence belongs to the SAAL1 family.

It localises to the nucleus. Functionally, plays a role in promoting cell proliferation in response to pro-inflammatory stimuli. This chain is Protein saal1 (saal1), found in Xenopus tropicalis (Western clawed frog).